The following is a 121-amino-acid chain: Basic phospholipase A2 homolog zhaoermiatoxin (121 aa).

Disulfide bonds link cysteine 26–cysteine 115, cysteine 28–cysteine 44, cysteine 43–cysteine 95, cysteine 49–cysteine 121, cysteine 50–cysteine 88, cysteine 57–cysteine 81, and cysteine 75–cysteine 86.

It belongs to the phospholipase A2 family. Group II subfamily. R49 sub-subfamily. As to quaternary structure, homodimer. In terms of tissue distribution, expressed by the venom gland.

The protein localises to the secreted. Functionally, snake venom phospholipase A2 homolog that induces myonecrosis, and edema. Has low myotoxic activity. This chain is Basic phospholipase A2 homolog zhaoermiatoxin, found in Protobothrops mangshanensis (Mangshan pitviper).